The chain runs to 523 residues: Effector protein hopAB1 (523 aa).

3 disordered regions span residues 1 to 94 (MPGI…EAQQ), 165 to 223 (VRQQ…QGLD), and 299 to 320 (RQTT…SGRR). The span at 18–31 (TDGEPVTEREHDSS) shows a compositional bias: basic and acidic residues. Residues 181-194 (SSSGSSQRSLIGRS) show a composition bias toward low complexity.

This sequence belongs to the HopAB family.

The protein resides in the secreted. Effector protein that plays different roles depending on the species and plant cultivars that interact with the pathogen. Acts as a virulence determinant by enhancing the development of disease symptoms and bacterial growth. Acts as an avirulence factor by eliciting hypersensitive response (HR) and plant resistance. This chain is Effector protein hopAB1 (hopAB1), found in Pseudomonas savastanoi pv. glycinea (Pseudomonas syringae pv. glycinea).